We begin with the raw amino-acid sequence, 310 residues long: MNELPLHLLNMRSLTRDHIEKLIQRANYFLTQGMEKNSVFETLKGHVVANLFFEPSTRTRNSFEIAAKRLGAMVLNPNLKISAISKGETLFDTIKTLEAMGVYFFIVRHSENETPEQIAKQLSSGVVINAGDGNHQHPSQALIDLMTIKQHKPHWNKLCVTIIGDIRHSRVANSLMDGLVTMGVPEIRLVGPSSLLPDKVGNDSIKKFTELKPSLLNSDVIVTLRLQKERHDNSVDIDAFRGSFRLTPEKLYSAKPDAIVMHPGPVNREVEINSDVADNQQSVILQQVRNGVAMRMAVLELFLLRDFRFF.

Residues Arg-58 and Thr-59 each contribute to the carbamoyl phosphate site. Lys-86 contacts L-aspartate. Carbamoyl phosphate contacts are provided by Arg-108, His-137, and Gln-140. Residues Arg-170 and Arg-225 each coordinate L-aspartate. Gly-264 and Pro-265 together coordinate carbamoyl phosphate.

This sequence belongs to the aspartate/ornithine carbamoyltransferase superfamily. ATCase family. Heterododecamer (2C3:3R2) of six catalytic PyrB chains organized as two trimers (C3), and six regulatory PyrI chains organized as three dimers (R2).

It carries out the reaction carbamoyl phosphate + L-aspartate = N-carbamoyl-L-aspartate + phosphate + H(+). Its pathway is pyrimidine metabolism; UMP biosynthesis via de novo pathway; (S)-dihydroorotate from bicarbonate: step 2/3. Catalyzes the condensation of carbamoyl phosphate and aspartate to form carbamoyl aspartate and inorganic phosphate, the committed step in the de novo pyrimidine nucleotide biosynthesis pathway. This Coxiella burnetii (strain CbuG_Q212) (Coxiella burnetii (strain Q212)) protein is Aspartate carbamoyltransferase catalytic subunit.